We begin with the raw amino-acid sequence, 355 residues long: MAVDFSMRQLLEAGAHFGHQAHRWNPKMQPYIFGTRNNIHIIDLAQTVPAMHQALQAVSDTVAKGGRVLFVGTKRQAADTIAEAAKRSAQYYVNSRWLGGMLTNWKTISGSISRLRKVTETLETGGPGLTKKERLMLSREKEKLEKALGGIKDMGGVPDLLFVIDTNKEQLAIKEANRLGIPVAAIVDTNCNPDGISYIVPANDDAGRAIALYCDLIAKAAIDGISRAQGSSGMDLGASEEPMAEELPANDDAAVTVESDALDPADVAMLAESTEHFELLAAPRGAPDDLTKLNGAGPQIVQKLNDAGIYHYWQLAAMTPEDVAKVDADLKLNGRIDRDSWVSQARGFVEAAAAA.

This sequence belongs to the universal ribosomal protein uS2 family.

This Methylobacterium radiotolerans (strain ATCC 27329 / DSM 1819 / JCM 2831 / NBRC 15690 / NCIMB 10815 / 0-1) protein is Small ribosomal subunit protein uS2.